The following is a 229-amino-acid chain: 3-dehydroquinate dehydratase (229 aa).

Residues Glu-33–Arg-35 and Arg-65 each bind 3-dehydroquinate. Catalysis depends on His-121, which acts as the Proton donor/acceptor. Lys-146 (schiff-base intermediate with substrate) is an active-site residue. Residues Arg-188, Ser-207, and Gln-211 each contribute to the 3-dehydroquinate site.

Belongs to the type-I 3-dehydroquinase family. In terms of assembly, homodimer.

It catalyses the reaction 3-dehydroquinate = 3-dehydroshikimate + H2O. It participates in metabolic intermediate biosynthesis; chorismate biosynthesis; chorismate from D-erythrose 4-phosphate and phosphoenolpyruvate: step 3/7. Functionally, involved in the third step of the chorismate pathway, which leads to the biosynthesis of aromatic amino acids. Catalyzes the cis-dehydration of 3-dehydroquinate (DHQ) and introduces the first double bond of the aromatic ring to yield 3-dehydroshikimate. In Lactococcus lactis subsp. cremoris (strain MG1363), this protein is 3-dehydroquinate dehydratase.